A 266-amino-acid chain; its full sequence is GTP cyclohydrolase III (266 aa).

Belongs to the archaeal-type GTP cyclohydrolase family.

The enzyme catalyses GTP + 3 H2O = 2-amino-5-formylamino-6-(5-phospho-D-ribosylamino)pyrimidin-4(3H)-one + 2 phosphate + 2 H(+). Its function is as follows. Catalyzes the formation of 2-amino-5-formylamino-6-ribofuranosylamino-4(3H)-pyrimidinone ribonucleotide monophosphate and inorganic phosphate from GTP. Also has an independent pyrophosphate phosphohydrolase activity. In Methanococcus vannielii (strain ATCC 35089 / DSM 1224 / JCM 13029 / OCM 148 / SB), this protein is GTP cyclohydrolase III.